The sequence spans 213 residues: Ribonuclease HII (213 aa).

The RNase H type-2 domain occupies glycine 2–arginine 213. 3 residues coordinate a divalent metal cation: aspartate 8, glutamate 9, and aspartate 113.

It belongs to the RNase HII family. The cofactor is Mn(2+). Mg(2+) serves as cofactor.

It is found in the cytoplasm. It catalyses the reaction Endonucleolytic cleavage to 5'-phosphomonoester.. Its function is as follows. Endonuclease that specifically degrades the RNA of RNA-DNA hybrids. In Thermofilum pendens (strain DSM 2475 / Hrk 5), this protein is Ribonuclease HII.